Reading from the N-terminus, the 255-residue chain is Thiazole synthase (255 aa).

Residue Lys95 is the Schiff-base intermediate with DXP of the active site. 1-deoxy-D-xylulose 5-phosphate-binding positions include Gly156, 182–183 (AG), and 204–205 (NT).

The protein belongs to the ThiG family. Homotetramer. Forms heterodimers with either ThiH or ThiS.

The protein localises to the cytoplasm. The catalysed reaction is [ThiS sulfur-carrier protein]-C-terminal-Gly-aminoethanethioate + 2-iminoacetate + 1-deoxy-D-xylulose 5-phosphate = [ThiS sulfur-carrier protein]-C-terminal Gly-Gly + 2-[(2R,5Z)-2-carboxy-4-methylthiazol-5(2H)-ylidene]ethyl phosphate + 2 H2O + H(+). It functions in the pathway cofactor biosynthesis; thiamine diphosphate biosynthesis. Functionally, catalyzes the rearrangement of 1-deoxy-D-xylulose 5-phosphate (DXP) to produce the thiazole phosphate moiety of thiamine. Sulfur is provided by the thiocarboxylate moiety of the carrier protein ThiS. In vitro, sulfur can be provided by H(2)S. The chain is Thiazole synthase from Photorhabdus laumondii subsp. laumondii (strain DSM 15139 / CIP 105565 / TT01) (Photorhabdus luminescens subsp. laumondii).